The sequence spans 220 residues: Adenylate kinase (220 aa).

10–15 (GSGKST) contributes to the ATP binding site. Residues 30–59 (SSGDIIRAEISSRTPLGLEMEKYLSRGDLI) are NMP. Residues S31, R36, 57 to 59 (DLI), 83 to 86 (GYPR), and Q90 contribute to the AMP site. An LID region spans residues 124-161 (GRRICSKCGAVYHIEFNPPKIPGKCDICGGDLIQRPDD). Residue R125 participates in ATP binding. The Zn(2+) site is built by C128 and C131. Position 134-135 (134-135 (VY)) interacts with ATP. C148 and C151 together coordinate Zn(2+). The AMP site is built by R158 and R169. G197 contributes to the ATP binding site.

The protein belongs to the adenylate kinase family. In terms of assembly, monomer.

The protein localises to the cytoplasm. The enzyme catalyses AMP + ATP = 2 ADP. It functions in the pathway purine metabolism; AMP biosynthesis via salvage pathway; AMP from ADP: step 1/1. In terms of biological role, catalyzes the reversible transfer of the terminal phosphate group between ATP and AMP. Plays an important role in cellular energy homeostasis and in adenine nucleotide metabolism. The sequence is that of Adenylate kinase from Pyrococcus horikoshii (strain ATCC 700860 / DSM 12428 / JCM 9974 / NBRC 100139 / OT-3).